Here is a 280-residue protein sequence, read N- to C-terminus: Succinate dehydrogenase [ubiquinone] iron-sulfur subunit, mitochondrial (280 aa).

The N-terminal 25 residues, 1 to 25 (MAAVCFSLSRCCSAVHRPAVTAVRF), are a transit peptide targeting the mitochondrion. One can recognise a 2Fe-2S ferredoxin-type domain in the interval 39–129 (KKFQIYRWDP…TSKVTKIYPL (91 aa)). [2Fe-2S] cluster is bound by residues C92, C97, C100, and C112. The 4Fe-4S ferredoxin-type domain maps to 175 to 205 (DRQKLDGLYECILCACCSTSCPSYWWNADKY). [4Fe-4S] cluster contacts are provided by C185, C188, and C191. C195 is a binding site for [3Fe-4S] cluster. W200 serves as a coordination point for a ubiquinone. C242 and C248 together coordinate [3Fe-4S] cluster. Position 252 (C252) interacts with [4Fe-4S] cluster.

The protein belongs to the succinate dehydrogenase/fumarate reductase iron-sulfur protein family. As to quaternary structure, component of complex II composed of four subunits: the flavoprotein (FP) sdha, iron-sulfur protein (IP) sdhb, and a cytochrome b composed of sdhc and sdhd. [2Fe-2S] cluster serves as cofactor. The cofactor is [3Fe-4S] cluster. [4Fe-4S] cluster is required as a cofactor.

Its subcellular location is the mitochondrion inner membrane. The catalysed reaction is a quinone + succinate = fumarate + a quinol. It carries out the reaction (R)-malate + a quinone = enol-oxaloacetate + a quinol. It catalyses the reaction (S)-malate + a quinone = enol-oxaloacetate + a quinol. Its pathway is carbohydrate metabolism; tricarboxylic acid cycle; fumarate from succinate (eukaryal route): step 1/1. Its activity is regulated as follows. Enol-oxaloacetate inhibits the succinate dehydrogenase activity. Iron-sulfur protein (IP) subunit of the succinate dehydrogenase complex (mitochondrial respiratory chain complex II), responsible for transferring electrons from succinate to ubiquinone (coenzyme Q). SDH also oxidizes malate to the non-canonical enol form of oxaloacetate, enol-oxaloacetate. Enol-oxaloacetate, which is a potent inhibitor of the succinate dehydrogenase activity, is further isomerized into keto-oxaloacetate. The polypeptide is Succinate dehydrogenase [ubiquinone] iron-sulfur subunit, mitochondrial (sdhb) (Danio rerio (Zebrafish)).